We begin with the raw amino-acid sequence, 71 residues long: Pro-MCH (71 aa).

The N-terminal stretch at 1–20 is a signal peptide; the sequence is AKMNLSSYILILTFSLFSQG.

It belongs to the melanin-concentrating hormone family.

The protein resides in the secreted. This chain is Pro-MCH (PMCH), found in Pan paniscus (Pygmy chimpanzee).